Here is an 84-residue protein sequence, read N- to C-terminus: Exodeoxyribonuclease 7 small subunit (84 aa).

This sequence belongs to the XseB family. As to quaternary structure, heterooligomer composed of large and small subunits.

It localises to the cytoplasm. It catalyses the reaction Exonucleolytic cleavage in either 5'- to 3'- or 3'- to 5'-direction to yield nucleoside 5'-phosphates.. In terms of biological role, bidirectionally degrades single-stranded DNA into large acid-insoluble oligonucleotides, which are then degraded further into small acid-soluble oligonucleotides. The sequence is that of Exodeoxyribonuclease 7 small subunit from Bacillus velezensis (strain DSM 23117 / BGSC 10A6 / LMG 26770 / FZB42) (Bacillus amyloliquefaciens subsp. plantarum).